We begin with the raw amino-acid sequence, 542 residues long: ATP synthase subunit alpha (542 aa).

G176–T183 is a binding site for ATP.

It belongs to the ATPase alpha/beta chains family. In terms of assembly, F-type ATPases have 2 components, CF(1) - the catalytic core - and CF(0) - the membrane proton channel. CF(1) has five subunits: alpha(3), beta(3), gamma(1), delta(1), epsilon(1). CF(0) has three main subunits: a(1), b(2) and c(9-12). The alpha and beta chains form an alternating ring which encloses part of the gamma chain. CF(1) is attached to CF(0) by a central stalk formed by the gamma and epsilon chains, while a peripheral stalk is formed by the delta and b chains.

The protein localises to the cell membrane. It catalyses the reaction ATP + H2O + 4 H(+)(in) = ADP + phosphate + 5 H(+)(out). Produces ATP from ADP in the presence of a proton gradient across the membrane. The alpha chain is a regulatory subunit. The sequence is that of ATP synthase subunit alpha from Tropheryma whipplei (strain TW08/27) (Whipple's bacillus).